A 107-amino-acid polypeptide reads, in one-letter code: DNA polymerase delta subunit 4 (107 aa).

The PCNA-interaction protein motif (PIP box) signature appears at 1–16; it reads MGRKRFITDSYPVVKK. The segment at 1 to 40 is disordered; the sequence is MGRKRFITDSYPVVKKREGPPGHSKGELAPELGEDTQSLS. Over residues 15–28 the composition is skewed to basic and acidic residues; the sequence is KKREGPPGHSKGEL.

It belongs to the DNA polymerase delta subunit 4 family. As to quaternary structure, component of the tetrameric DNA polymerase delta complex (Pol-delta4), which consists of POLD1/p125, POLD2/p50, POLD3/p66/p68 and POLD4/p12, with POLD1 bearing DNA polymerase and 3' to 5' proofreading exonuclease activities. Within this complex, directly interacts with POLD1 and POLD2. Directly interacts with PCNA, as do POLD1 and POLD3; this interaction stimulates Pol-delta4 polymerase activity. As POLD1 and POLD2, directly interacts with WRNIP1; this interaction stimulates DNA polymerase delta-mediated DNA synthesis, independently of the presence of PCNA, possibly by increasing initiation frequency. Upon genotoxic stress induced by DNA damaging agents or by replication stress, POLD4 is proteolytically degraded and Pol-delta4 is converted into a trimeric form of the complex (Pol-delta3) that has an increased proofreading activity. The DNA polymerase delta complex interacts with POLDIP2; this interaction is probably mediated through direct binding to POLD2. In terms of processing, ubiquitinated; undergoes 'Lys-48'-linked polyubiquitination in response to UV irradiation or treatment with an alkylating agent, leading to proteasomal degradation. This modification is mediated, at least in part, by RNF8. Post-translationally, ubiquitinated; undergoes 'Lys-48'-linked ubiquitination in response to UV irradiation, leading to proteasomal degradation. This modification is partly mediated by RNF8 and by the DCX(DTL) E3 ubiquitin ligase complex (also called CRL4(CDT2)). Efficient degradation requires the presence of PCNA and is required for the inhibition of fork progression after DNA damage.

The protein resides in the nucleus. In terms of biological role, as a component of the tetrameric DNA polymerase delta complex (Pol-delta4), plays a role in high fidelity genome replication and repair. Within this complex, increases the rate of DNA synthesis and decreases fidelity by regulating POLD1 polymerase and proofreading 3' to 5' exonuclease activity. Pol-delta4 participates in Okazaki fragment processing, through both the short flap pathway, as well as a nick translation system. Under conditions of DNA replication stress, required for the repair of broken replication forks through break-induced replication (BIR), a mechanism that may induce segmental genomic duplications of up to 200 kb. Involved in Pol-delta4 translesion synthesis (TLS) of templates carrying O6-methylguanine or abasic sites. Its degradation in response to DNA damage is required for the inhibition of fork progression and cell survival. This is DNA polymerase delta subunit 4 (Pold4) from Mus musculus (Mouse).